Reading from the N-terminus, the 307-residue chain is Putative ankyrin repeat protein R229 (307 aa).

6 ANK repeats span residues 135–164 (ASRV…DINV), 165–194 (DNDK…NVHA), 196–224 (DDEA…NVNA), 226–254 (NDYA…NPMA), 256–284 (RYYP…SMVY), and 286–307 (SYAM…LLLD).

The sequence is that of Putative ankyrin repeat protein R229 from Acanthamoeba polyphaga (Amoeba).